The sequence spans 223 residues: Phosphoribosylformylglycinamidine synthase subunit PurQ (223 aa).

In terms of domain architecture, Glutamine amidotransferase type-1 spans Ser3–Ala223. Catalysis depends on Cys86, which acts as the Nucleophile. Residues His196 and Glu198 contribute to the active site.

In terms of assembly, part of the FGAM synthase complex composed of 1 PurL, 1 PurQ and 2 PurS subunits.

The protein resides in the cytoplasm. It carries out the reaction N(2)-formyl-N(1)-(5-phospho-beta-D-ribosyl)glycinamide + L-glutamine + ATP + H2O = 2-formamido-N(1)-(5-O-phospho-beta-D-ribosyl)acetamidine + L-glutamate + ADP + phosphate + H(+). The enzyme catalyses L-glutamine + H2O = L-glutamate + NH4(+). The protein operates within purine metabolism; IMP biosynthesis via de novo pathway; 5-amino-1-(5-phospho-D-ribosyl)imidazole from N(2)-formyl-N(1)-(5-phospho-D-ribosyl)glycinamide: step 1/2. Functionally, part of the phosphoribosylformylglycinamidine synthase complex involved in the purines biosynthetic pathway. Catalyzes the ATP-dependent conversion of formylglycinamide ribonucleotide (FGAR) and glutamine to yield formylglycinamidine ribonucleotide (FGAM) and glutamate. The FGAM synthase complex is composed of three subunits. PurQ produces an ammonia molecule by converting glutamine to glutamate. PurL transfers the ammonia molecule to FGAR to form FGAM in an ATP-dependent manner. PurS interacts with PurQ and PurL and is thought to assist in the transfer of the ammonia molecule from PurQ to PurL. In Rhizobium etli (strain ATCC 51251 / DSM 11541 / JCM 21823 / NBRC 15573 / CFN 42), this protein is Phosphoribosylformylglycinamidine synthase subunit PurQ.